The following is a 170-amino-acid chain: Bifunctional protein PyrR (170 aa).

The PRPP-binding motif lies at 90-102; it reads LVLVDDVLMSGRT.

This sequence belongs to the purine/pyrimidine phosphoribosyltransferase family. PyrR subfamily.

The catalysed reaction is UMP + diphosphate = 5-phospho-alpha-D-ribose 1-diphosphate + uracil. Regulates the transcription of the pyrimidine nucleotide (pyr) operon in response to exogenous pyrimidines. Functionally, also displays a weak uracil phosphoribosyltransferase activity which is not physiologically significant. This chain is Bifunctional protein PyrR, found in Pseudomonas aeruginosa (strain LESB58).